The following is a 382-amino-acid chain: Na(+)/H(+) antiporter NhaA 2 (382 aa).

The next 12 membrane-spanning stretches (helical) occupy residues 7–27 (AGGV…NSYL), 28–48 (SGFY…AFEI), 52–72 (LLLW…GLEV), 88–108 (VLPG…YASF), 118–138 (GWAI…SLFG), 147–167 (LFLL…IALF), 170–190 (HELS…LFVL), 206–226 (LVVW…GFVI), 254–274 (VAYF…LGGI), 285–305 (LGII…VCWL), 325–345 (GVCL…SLAF), and 356–376 (VKLG…LILT).

The protein belongs to the NhaA Na(+)/H(+) (TC 2.A.33) antiporter family.

The protein resides in the cell inner membrane. The enzyme catalyses Na(+)(in) + 2 H(+)(out) = Na(+)(out) + 2 H(+)(in). Na(+)/H(+) antiporter that extrudes sodium in exchange for external protons. The sequence is that of Na(+)/H(+) antiporter NhaA 2 from Saccharophagus degradans (strain 2-40 / ATCC 43961 / DSM 17024).